The following is a 234-amino-acid chain: Leucyl/phenylalanyl-tRNA--protein transferase (234 aa).

The protein belongs to the L/F-transferase family.

It is found in the cytoplasm. The catalysed reaction is N-terminal L-lysyl-[protein] + L-leucyl-tRNA(Leu) = N-terminal L-leucyl-L-lysyl-[protein] + tRNA(Leu) + H(+). It carries out the reaction N-terminal L-arginyl-[protein] + L-leucyl-tRNA(Leu) = N-terminal L-leucyl-L-arginyl-[protein] + tRNA(Leu) + H(+). The enzyme catalyses L-phenylalanyl-tRNA(Phe) + an N-terminal L-alpha-aminoacyl-[protein] = an N-terminal L-phenylalanyl-L-alpha-aminoacyl-[protein] + tRNA(Phe). Functions in the N-end rule pathway of protein degradation where it conjugates Leu, Phe and, less efficiently, Met from aminoacyl-tRNAs to the N-termini of proteins containing an N-terminal arginine or lysine. The sequence is that of Leucyl/phenylalanyl-tRNA--protein transferase from Shigella sonnei (strain Ss046).